A 137-amino-acid chain; its full sequence is uncharacterized protein (137 aa).

Transmembrane regions (helical) follow at residues 26–42 and 52–69; these read CSLC…FFAM and ASIP…GSIL.

It is found in the membrane. This is an uncharacterized protein from Saccharomyces cerevisiae (strain ATCC 204508 / S288c) (Baker's yeast).